Reading from the N-terminus, the 412-residue chain is Putative disintegrin and metalloproteinase domain-containing protein 5 (412 aa).

Residues 111 to 199 (EKYADTNILL…YCLPDTYVRD (89 aa)) form the Disintegrin domain. The 35-residue stretch at 351–385 (NLKLCDASNHCDRHGVCNNFNHCHCEKGYNPPYCQ) folds into the EGF-like domain.

In terms of assembly, interacts with TEX101. As to expression, highly expressed in testis.

This is a non catalytic metalloprotease-like protein. The protein is Putative disintegrin and metalloproteinase domain-containing protein 5 (ADAM5) of Homo sapiens (Human).